The chain runs to 343 residues: MLDDRNVLDDRKLAVLRAIVEDYVSTNEPVGSKALAERHKLGVSPATIRNDMVALEELGYIAQPHTSAGRVPTDKGYRLFVDRLSKVKPLSKAERRAIETFLSGALDLDEIVSRTVRLLAHLTRQVAIMQYPSLTRSSVQHLELVPLGPQRLMLVLITNTGRVEQRVIDGLAEVSDDVVENLRGALNRALVGKWLTEAPKEFPTVLAQLPLEERPIAESVMSVLTESLVEKHEGKVVFGGTANLAAMGFSAGLRDVLEALEENVVLIRLLGEMGDASMLTVRIGAENNHEGLQSTSIVAAGYGIGDQTLAKLGVVGPTRMDYPGTMGAVRAVARYVGQILAGQ.

Belongs to the HrcA family.

In terms of biological role, negative regulator of class I heat shock genes (grpE-dnaK-dnaJ and groELS operons). Prevents heat-shock induction of these operons. The protein is Heat-inducible transcription repressor HrcA of Thermobifida fusca (strain YX).